Reading from the N-terminus, the 481-residue chain is Serine/threonine-protein kinase US3 (481 aa).

The segment at 12-63 (GQGRRKEEAVPPETKPSRVFPHGPFYTPAEDACLDSPPPETPKPSHTTPPSE) is disordered. Residues 191 to 478 (FTIHGALTPG…AAELLCLPLF (288 aa)) form the Protein kinase domain. Residues 197 to 205 (LTPGSEGCV) and Lys-220 contribute to the ATP site. Asp-305 functions as the Proton acceptor in the catalytic mechanism.

The protein belongs to the protein kinase superfamily. Ser/Thr protein kinase family. In terms of assembly, interacts with host LAT; this interaction prevents LAT activation of TRAF6. In terms of processing, phosphorylated by UL13; this phosphorylation regulates subsequent phosphorylation of UL31 and UL34 by US3. Autophosphorylated.

Its subcellular location is the host cytoplasm. It is found in the host nucleus. It carries out the reaction L-seryl-[protein] + ATP = O-phospho-L-seryl-[protein] + ADP + H(+). The catalysed reaction is L-threonyl-[protein] + ATP = O-phospho-L-threonyl-[protein] + ADP + H(+). Functionally, multifunctional serine/threonine kinase that plays a role in several processes including egress of virus particles from the nucleus, modulation of the actin cytoskeleton and inhibition of host immune response. Phosphorylates UL31 and UL34, two critical regulators of capsid budding from nucleus to endoplasmic reticulum, thereby facilitating virion egress. Modulates and redistributes host components of the nuclear envelope, including LMNA, emerin/EMD and the nuclear matrix protein MATR3. In turn, facilitates nuclear pore impairment and capsid release through impaired nuclear envelope. Phosphorylates envelope glycoprotein B (gB), probably to direct it to the cell surface. Promotes virus intracellular spread by restructuring host cell cytoskeleton. Blocks host apoptosis to extend cell survival and allow efficient viral replication. Promotes viral gene expression by phosphorylating host HDAC2 to reduce viral genome silencing. Strongly inhibits TCR-activated signal transduction in T-cells by reducing the ubiquitination of LAT and TRAF6, leading to a suboptimal activation of LAT. Subverts host antiviral innate immunity by inhibiting type I interferon production through hyperphosphorylation of beta-catenin/CTNNB1. In addition, phosphorylates the RNA sensor RIGI and the transcription factor IRF3 to prevent the RLR-mediated antiviral signaling pathway. Hyperphosphorylates host RELA and thereby dampens NF-kappa-B signaling. Acts as an immunoevasin partly responsible for inhibition of MR1 expression and antigen presentation in response to bacterial infection. The polypeptide is Serine/threonine-protein kinase US3 (US3) (Human herpesvirus 1 (strain 17) (HHV-1)).